We begin with the raw amino-acid sequence, 192 residues long: Elongation factor P (192 aa).

Belongs to the elongation factor P family.

It localises to the cytoplasm. It functions in the pathway protein biosynthesis; polypeptide chain elongation. Functionally, involved in peptide bond synthesis. Stimulates efficient translation and peptide-bond synthesis on native or reconstituted 70S ribosomes in vitro. Probably functions indirectly by altering the affinity of the ribosome for aminoacyl-tRNA, thus increasing their reactivity as acceptors for peptidyl transferase. The chain is Elongation factor P (efp) from Borreliella burgdorferi (strain ATCC 35210 / DSM 4680 / CIP 102532 / B31) (Borrelia burgdorferi).